Here is a 324-residue protein sequence, read N- to C-terminus: Proto-oncogene Mas (324 aa).

The Extracellular segment spans residues 1–35 (MDQSNMTSLAEEKAMNTSSRNASLGSSHPPIPIVH). N-linked (GlcNAc...) asparagine glycosylation is found at asparagine 5, asparagine 16, and asparagine 21. A helical membrane pass occupies residues 36-60 (WVIMSISPLGFVENGILLWFLCFRM). Over 61 to 64 (RRNP) the chain is Cytoplasmic. A helical transmembrane segment spans residues 65 to 86 (FTVYITHLSIADISLLFCIFIL). Over 87-103 (SIDYALDYELSSGHHYT) the chain is Extracellular. Residues 104–127 (IVTLSVTFLFGYNTGLYLLTAISV) traverse the membrane as a helical segment. Residues 128–148 (ERCLSVLYPIWYRCHRPKHQS) are Cytoplasmic-facing. A helical transmembrane segment spans residues 149–171 (AFVCALLWALSCLVTTMEYVMCI). The Extracellular portion of the chain corresponds to 172 to 184 (DSGEESHSRSDCR). Residues 185–205 (AVIIFIAILSFLVFTPLMLVS) form a helical membrane-spanning segment. The Cytoplasmic portion of the chain corresponds to 206-223 (STILVVKIRKNTWASHSS). A helical membrane pass occupies residues 224-244 (KLYIVIMVTIIIFLIFAMPMR). Residues 245-262 (VLYLLYYEYWSAFGNLHN) are Extracellular-facing. A helical membrane pass occupies residues 263–283 (ISLLFSTINSSANPFIYFFVG). Topologically, residues 284-324 (SSKKKRFRESLKVVLTRAFKDEMQPRRQEGNGNTVSIETVV) are cytoplasmic.

This sequence belongs to the G-protein coupled receptor 1 family. As to quaternary structure, interacts with AGTR1. Interacts with FLNA (via filamin repeat 21); increases PKA-mediated phosphorylation of FLNA.

The protein resides in the cell membrane. In terms of biological role, acts specifically as a functional antagonist of AGTR1 (angiotensin-2 type 1 receptor), although it up-regulates AGTR1 receptor levels. Positive regulation of AGTR1 levels occurs through activation of the G-proteins GNA11 and GNAQ, and stimulation of the protein kinase C signaling cascade. The antagonist effect on AGTR1 function is probably due to AGTR1 being physically altered by MAS1. Receptor for angiotensin 1-7. The protein is Proto-oncogene Mas (Mas1) of Mus musculus (Mouse).